A 776-amino-acid polypeptide reads, in one-letter code: Protein SEY1 (776 aa).

Over 1-681 (MADRSAIQLI…KRSIITTRTH (681 aa)) the chain is Cytoplasmic. The 230-residue stretch at 34–263 (GLDYHVISVF…TENYYFKPQY (230 aa)) folds into the GB1/RHD3-type G domain. 44 to 51 (GSQSSGKS) lines the GTP pocket. A helical transmembrane segment spans residues 682–702 (IPPWIYVLLAVLGWNEFVAVI). The Lumenal segment spans residues 703–705 (RNP). Residues 706-726 (LFVTLTLILGATFFVIHKFGL) traverse the membrane as a helical segment. Residues 727–776 (WGPVVNVVQSAVGETRTAIKDKLRQFVVEDHEVKESFEMKDFSKNEQKEK) are Cytoplasmic-facing.

This sequence belongs to the TRAFAC class dynamin-like GTPase superfamily. GB1/RHD3 GTPase family. RHD3 subfamily. In terms of assembly, interacts with RTN1 and YOP1; GTP binding is not required for these interactions.

Its subcellular location is the endoplasmic reticulum membrane. Functionally, cooperates with the reticulon proteins RTN1 and RTN2 and the tubule-shaping DP1 family protein YOP1 to generate and maintain the structure of the tubular endoplasmic reticulum network. Has GTPase activity, which is required for its function in ER organization. The protein is Protein SEY1 of Saccharomyces cerevisiae (strain AWRI1631) (Baker's yeast).